Here is a 407-residue protein sequence, read N- to C-terminus: Peptidase T (407 aa).

Residue histidine 82 coordinates Zn(2+). The active site involves aspartate 84. Position 143 (aspartate 143) interacts with Zn(2+). Residue glutamate 177 is the Proton acceptor of the active site. The Zn(2+) site is built by glutamate 178, aspartate 200, and histidine 382.

Belongs to the peptidase M20B family. Zn(2+) serves as cofactor.

The protein resides in the cytoplasm. It catalyses the reaction Release of the N-terminal residue from a tripeptide.. In terms of biological role, cleaves the N-terminal amino acid of tripeptides. This chain is Peptidase T, found in Streptococcus pyogenes serotype M4 (strain MGAS10750).